Consider the following 52-residue polypeptide: NADH dehydrogenase [ubiquinone] 1 alpha subcomplex subunit 4 homolog (52 aa).

The chain crosses the membrane as a helical span at residues 14 to 30 (LYPLGAAVATAVGFATY).

It belongs to the complex I NDUFA4 subunit family.

It is found in the mitochondrion inner membrane. Functionally, accessory subunit of the mitochondrial membrane respiratory chain NADH dehydrogenase (Complex I), that is believed to be not involved in catalysis. Complex I functions in the transfer of electrons from NADH to the respiratory chain. The immediate electron acceptor for the enzyme is believed to be ubiquinone. In Schizosaccharomyces pombe (strain 972 / ATCC 24843) (Fission yeast), this protein is NADH dehydrogenase [ubiquinone] 1 alpha subcomplex subunit 4 homolog.